A 379-amino-acid chain; its full sequence is Queuine tRNA-ribosyltransferase (379 aa).

Catalysis depends on Asp-91, which acts as the Proton acceptor. Substrate contacts are provided by residues 91–95 (DSGGF), Asp-145, Gln-189, and Gly-216. Positions 247–253 (GVGKPED) are RNA binding. Asp-266 functions as the Nucleophile in the catalytic mechanism. An RNA binding; important for wobble base 34 recognition region spans residues 271-275 (TRNAR). Zn(2+) contacts are provided by Cys-304, Cys-306, Cys-309, and His-335.

This sequence belongs to the queuine tRNA-ribosyltransferase family. As to quaternary structure, homodimer. Within each dimer, one monomer is responsible for RNA recognition and catalysis, while the other monomer binds to the replacement base PreQ1. Zn(2+) serves as cofactor.

It catalyses the reaction 7-aminomethyl-7-carbaguanine + guanosine(34) in tRNA = 7-aminomethyl-7-carbaguanosine(34) in tRNA + guanine. The protein operates within tRNA modification; tRNA-queuosine biosynthesis. Catalyzes the base-exchange of a guanine (G) residue with the queuine precursor 7-aminomethyl-7-deazaguanine (PreQ1) at position 34 (anticodon wobble position) in tRNAs with GU(N) anticodons (tRNA-Asp, -Asn, -His and -Tyr). Catalysis occurs through a double-displacement mechanism. The nucleophile active site attacks the C1' of nucleotide 34 to detach the guanine base from the RNA, forming a covalent enzyme-RNA intermediate. The proton acceptor active site deprotonates the incoming PreQ1, allowing a nucleophilic attack on the C1' of the ribose to form the product. After dissociation, two additional enzymatic reactions on the tRNA convert PreQ1 to queuine (Q), resulting in the hypermodified nucleoside queuosine (7-(((4,5-cis-dihydroxy-2-cyclopenten-1-yl)amino)methyl)-7-deazaguanosine). This is Queuine tRNA-ribosyltransferase from Vibrio cholerae serotype O1 (strain ATCC 39315 / El Tor Inaba N16961).